Here is a 2633-residue protein sequence, read N- to C-terminus: Non-reducing polyketide synthase sor2 (2633 aa).

Residues Val67 to Leu237 are N-terminal acylcarrier protein transacylase domain (SAT). Cys140 acts as the Nucleophile; for transacylase activity in catalysis. The active-site Proton donor/acceptor; for transacylase activity is His258. The Ketosynthase family 3 (KS3) domain occupies Glu389 to Gln814. Catalysis depends on for beta-ketoacyl synthase activity residues Cys561, His696, and His737. The tract at residues Cys928–Val1239 is malonyl-CoA:ACP transacylase (MAT) domain. The interval Pro1307 to Asp1437 is N-terminal hotdog fold. One can recognise a PKS/mFAS DH domain in the interval Pro1307–Phe1627. Residues Met1338–Arg1509 are product template (PT) domain. A C-terminal hotdog fold region spans residues Gly1464–Phe1627. A Carrier domain is found at Glu1684–Leu1758. Ser1718 carries the post-translational modification O-(pantetheine 4'-phosphoryl)serine. A disordered region spans residues Asp1762–Pro1792. Residues Glu1768–Ala1790 show a composition bias toward polar residues. The tract at residues Phe1982–Thr2166 is methyltransferase domain. The tract at residues Val2253–Gly2495 is NADPH-binding (R) domain.

It depends on pantetheine 4'-phosphate as a cofactor.

It participates in secondary metabolite biosynthesis. Its function is as follows. Non-reducing polyketide synthase; part of the SOR gene cluster that mediates the biosynthesis of sorbicillinoids, a diverse group of yellow secondary metabolites that restrict growth of competing pathogenic fungi but not of bacteria. Sorbicillinoids biosynthesis requires the action of two PKSs. The SOR cluster is required for the production of trichodimerol and dihydrotrichotetronin, with sor2 being sufficient for production of trichodimerol, but not dihydrotrichotetronin in the light. Sor1 iteratively combines three acetyl units and the growing chain is modified by the ketoacyl reductase subunit, and optional by the enoyl reductase subunit in the second cycle. The polyketide is then handed over to the PKS sor2, which adds three more acetyl units, and two methyl groups. Sor2 releases an aldehyde, which undergoes spontaneous cyclization resulting in the formation of sorbicillin or 2',3'-dihydrosorbicillin. The monooxygenase sor5 oxidizes sorbicillin and 2',3'-dihydrosorbicillin to 2',3'-dihydrosorbicillinol and sorbicillinol, respectively. The oxidoreductase sor8 further converts sorbicillinol into oxosorbicillinol. Sorbicillinol is the building block for the other sorbicillinoids such as disorbicillinol, bisvertinolon, dihydrobisvertinolone, and dihydrotrichotetronine. The polypeptide is Non-reducing polyketide synthase sor2 (Hypocrea jecorina (strain QM6a) (Trichoderma reesei)).